A 1077-amino-acid polypeptide reads, in one-letter code: Carbamoyl phosphate synthase large chain (1077 aa).

Positions 1-403 (MPKRTDIQSI…SLHKALRGLE (403 aa)) are carboxyphosphate synthetic domain. ATP-binding residues include Arg129, Arg169, Gly175, Gly176, Glu208, Leu210, Glu215, Gly241, Ile242, His243, Gln285, and Glu299. In terms of domain architecture, ATP-grasp 1 spans 133-328 (DKAMKSIGLE…IAKIAAKLAV (196 aa)). Residues Gln285, Glu299, and Asn301 each coordinate Mg(2+). Residues Gln285, Glu299, and Asn301 each contribute to the Mn(2+) site. The interval 404–553 (VGATGFDEMV…YSSYDEECEA (150 aa)) is oligomerization domain. A carbamoyl phosphate synthetic domain region spans residues 554-935 (NPTDKDKIMV…AYAKAELGCG (382 aa)). Residues 678–869 (QAAVERLGLL…LAKIAARVMA (192 aa)) form the ATP-grasp 2 domain. Residues Arg714, Arg753, Leu755, Glu760, Gly785, Val786, His787, Ser788, Gln828, and Glu840 each coordinate ATP. Residues Gln828, Glu840, and Asn842 each coordinate Mg(2+). 3 residues coordinate Mn(2+): Gln828, Glu840, and Asn842. The 142-residue stretch at 936-1077 (SVYPEGGRAL…HAKVKASLEA (142 aa)) folds into the MGS-like domain. Residues 936–1077 (SVYPEGGRAL…HAKVKASLEA (142 aa)) form an allosteric domain region.

Belongs to the CarB family. As to quaternary structure, composed of two chains; the small (or glutamine) chain promotes the hydrolysis of glutamine to ammonia, which is used by the large (or ammonia) chain to synthesize carbamoyl phosphate. Tetramer of heterodimers (alpha,beta)4. The cofactor is Mg(2+). Requires Mn(2+) as cofactor.

It carries out the reaction hydrogencarbonate + L-glutamine + 2 ATP + H2O = carbamoyl phosphate + L-glutamate + 2 ADP + phosphate + 2 H(+). The enzyme catalyses hydrogencarbonate + NH4(+) + 2 ATP = carbamoyl phosphate + 2 ADP + phosphate + 2 H(+). The protein operates within amino-acid biosynthesis; L-arginine biosynthesis; carbamoyl phosphate from bicarbonate: step 1/1. It functions in the pathway pyrimidine metabolism; UMP biosynthesis via de novo pathway; (S)-dihydroorotate from bicarbonate: step 1/3. In terms of biological role, large subunit of the glutamine-dependent carbamoyl phosphate synthetase (CPSase). CPSase catalyzes the formation of carbamoyl phosphate from the ammonia moiety of glutamine, carbonate, and phosphate donated by ATP, constituting the first step of 2 biosynthetic pathways, one leading to arginine and/or urea and the other to pyrimidine nucleotides. The large subunit (synthetase) binds the substrates ammonia (free or transferred from glutamine from the small subunit), hydrogencarbonate and ATP and carries out an ATP-coupled ligase reaction, activating hydrogencarbonate by forming carboxy phosphate which reacts with ammonia to form carbamoyl phosphate. This chain is Carbamoyl phosphate synthase large chain, found in Vibrio parahaemolyticus serotype O3:K6 (strain RIMD 2210633).